The primary structure comprises 108 residues: MSGSAKYSDWSQVMTLIANAAEQGNHQPLLTMLMTPDEREALVARVNIFHELLQGELSQRQISQLLGVGVATITRGSNELKSHTDEEKVWLMDLLEKSTKNELDVEKE.

A DNA-binding region spans residues 59-82; the sequence is QRQISQLLGVGVATITRGSNELKS.

The protein belongs to the TrpR family. As to quaternary structure, homodimer.

The protein localises to the cytoplasm. Functionally, this protein is an aporepressor. When complexed with L-tryptophan it binds the operator region of the trp operon and prevents the initiation of transcription. The polypeptide is Trp operon repressor homolog (Aliivibrio fischeri (strain MJ11) (Vibrio fischeri)).